We begin with the raw amino-acid sequence, 85 residues long: Small muscular protein (85 aa).

The disordered stretch occupies residues 19 to 63 (PMGAFRPGAGQPPRRKESTPGTAEGAPATPEEKKPVPGMKKFPGP). The residue at position 36 (S36) is a Phosphoserine. T47 carries the phosphothreonine modification.

The protein belongs to the SMPX family.

Functionally, plays a role in the regulatory network through which muscle cells coordinate their structural and functional states during growth, adaptation, and repair. This chain is Small muscular protein (Smpx), found in Rattus norvegicus (Rat).